A 226-amino-acid polypeptide reads, in one-letter code: AA9 family lytic polysaccharide monooxygenase E (226 aa).

An N-terminal signal peptide occupies residues 1–18; sequence MLANGAIVFLAAALGVSG. Cu(2+) is bound at residue His19. Intrachain disulfides connect Cys56–Cys174 and Cys144–Cys226. A glycan (N-linked (GlcNAc...) asparagine) is linked at Asn69. His86 is a Cu(2+) binding site. Residues His160 and Gln169 each contribute to the O2 site. Position 171 (Tyr171) interacts with Cu(2+).

It belongs to the polysaccharide monooxygenase AA9 family. Cu(2+) serves as cofactor.

The protein localises to the secreted. It catalyses the reaction [(1-&gt;4)-beta-D-glucosyl]n+m + reduced acceptor + O2 = 4-dehydro-beta-D-glucosyl-[(1-&gt;4)-beta-D-glucosyl]n-1 + [(1-&gt;4)-beta-D-glucosyl]m + acceptor + H2O.. Its function is as follows. Lytic polysaccharide monooxygenase (LPMO) that depolymerizes crystalline and amorphous polysaccharides via the oxidation of scissile alpha- or beta-(1-4)-glycosidic bonds, yielding C1 and C4 oxidation products. Catalysis by LPMOs requires the reduction of the active-site copper from Cu(II) to Cu(I) by a reducing agent and H(2)O(2) or O(2) as a cosubstrate. Shows endoglucanase activity on tamarind xyloglucan, as well as on beechwood xylan when combined with phosphoric acid swollen cellulose (PASC). Shows no activity on wheat arabinoxylan, konjac glucomannan, acetylated spruce galactoglucomannan, or cellopentaose. In Thermothielavioides terrestris (strain ATCC 38088 / NRRL 8126) (Thielavia terrestris), this protein is AA9 family lytic polysaccharide monooxygenase E.